The chain runs to 647 residues: 1-deoxy-D-xylulose-5-phosphate synthase (647 aa).

Thiamine diphosphate-binding positions include His74 and 115 to 117 (GHS). Asp146 is a binding site for Mg(2+). Thiamine diphosphate is bound by residues 147–148 (GA), Asn175, Tyr286, and Glu367. Asn175 contacts Mg(2+).

The protein belongs to the transketolase family. DXPS subfamily. As to quaternary structure, homodimer. Mg(2+) serves as cofactor. Thiamine diphosphate is required as a cofactor.

It carries out the reaction D-glyceraldehyde 3-phosphate + pyruvate + H(+) = 1-deoxy-D-xylulose 5-phosphate + CO2. It functions in the pathway metabolic intermediate biosynthesis; 1-deoxy-D-xylulose 5-phosphate biosynthesis; 1-deoxy-D-xylulose 5-phosphate from D-glyceraldehyde 3-phosphate and pyruvate: step 1/1. In terms of biological role, catalyzes the acyloin condensation reaction between C atoms 2 and 3 of pyruvate and glyceraldehyde 3-phosphate to yield 1-deoxy-D-xylulose-5-phosphate (DXP). The protein is 1-deoxy-D-xylulose-5-phosphate synthase of Heliobacterium modesticaldum (strain ATCC 51547 / Ice1).